The following is a 146-amino-acid chain: 3-dehydroquinate dehydratase (146 aa).

The active-site Proton acceptor is the Tyr-24. Substrate is bound by residues Asn-73, His-79, and Asp-86. His-99 acts as the Proton donor in catalysis. Substrate-binding positions include 100 to 101 (LS) and Arg-110.

This sequence belongs to the type-II 3-dehydroquinase family. Homododecamer.

The catalysed reaction is 3-dehydroquinate = 3-dehydroshikimate + H2O. The protein operates within metabolic intermediate biosynthesis; chorismate biosynthesis; chorismate from D-erythrose 4-phosphate and phosphoenolpyruvate: step 3/7. Its function is as follows. Catalyzes a trans-dehydration via an enolate intermediate. In Shewanella baltica (strain OS195), this protein is 3-dehydroquinate dehydratase.